We begin with the raw amino-acid sequence, 524 residues long: Glucose-6-phosphate isomerase (524 aa).

Glutamate 322 serves as the catalytic Proton donor. Catalysis depends on residues histidine 351 and lysine 453.

It belongs to the GPI family.

The protein resides in the cytoplasm. It catalyses the reaction alpha-D-glucose 6-phosphate = beta-D-fructose 6-phosphate. The protein operates within carbohydrate biosynthesis; gluconeogenesis. It functions in the pathway carbohydrate degradation; glycolysis; D-glyceraldehyde 3-phosphate and glycerone phosphate from D-glucose: step 2/4. Functionally, catalyzes the reversible isomerization of glucose-6-phosphate to fructose-6-phosphate. The chain is Glucose-6-phosphate isomerase from Prochlorococcus marinus (strain NATL2A).